We begin with the raw amino-acid sequence, 557 residues long: Dihydroxy-acid dehydratase (557 aa).

Aspartate 78 lines the Mg(2+) pocket. Cysteine 119 contributes to the [2Fe-2S] cluster binding site. 2 residues coordinate Mg(2+): aspartate 120 and lysine 121. At lysine 121 the chain carries N6-carboxylysine. A [2Fe-2S] cluster-binding site is contributed by cysteine 192. Glutamate 443 provides a ligand contact to Mg(2+). Residue serine 469 is the Proton acceptor of the active site.

This sequence belongs to the IlvD/Edd family. In terms of assembly, homodimer. Requires [2Fe-2S] cluster as cofactor. It depends on Mg(2+) as a cofactor.

It catalyses the reaction (2R)-2,3-dihydroxy-3-methylbutanoate = 3-methyl-2-oxobutanoate + H2O. The enzyme catalyses (2R,3R)-2,3-dihydroxy-3-methylpentanoate = (S)-3-methyl-2-oxopentanoate + H2O. Its pathway is amino-acid biosynthesis; L-isoleucine biosynthesis; L-isoleucine from 2-oxobutanoate: step 3/4. It participates in amino-acid biosynthesis; L-valine biosynthesis; L-valine from pyruvate: step 3/4. Functions in the biosynthesis of branched-chain amino acids. Catalyzes the dehydration of (2R,3R)-2,3-dihydroxy-3-methylpentanoate (2,3-dihydroxy-3-methylvalerate) into 2-oxo-3-methylpentanoate (2-oxo-3-methylvalerate) and of (2R)-2,3-dihydroxy-3-methylbutanoate (2,3-dihydroxyisovalerate) into 2-oxo-3-methylbutanoate (2-oxoisovalerate), the penultimate precursor to L-isoleucine and L-valine, respectively. This Persephonella marina (strain DSM 14350 / EX-H1) protein is Dihydroxy-acid dehydratase.